The chain runs to 329 residues: Uroporphyrinogen decarboxylase (329 aa).

Residues Arg-22–Arg-26, Asp-71, Tyr-140, Ser-195, and His-307 each bind substrate.

This sequence belongs to the uroporphyrinogen decarboxylase family. In terms of assembly, homodimer.

Its subcellular location is the cytoplasm. It carries out the reaction uroporphyrinogen III + 4 H(+) = coproporphyrinogen III + 4 CO2. It participates in porphyrin-containing compound metabolism; protoporphyrin-IX biosynthesis; coproporphyrinogen-III from 5-aminolevulinate: step 4/4. Functionally, catalyzes the decarboxylation of four acetate groups of uroporphyrinogen-III to yield coproporphyrinogen-III. The sequence is that of Uroporphyrinogen decarboxylase from Chlamydia pneumoniae (Chlamydophila pneumoniae).